Reading from the N-terminus, the 59-residue chain is Antitoxin RelB4 (59 aa).

The disordered stretch occupies residues 38–59 (VGEWLKTLGTPHQTPPPYSWRK). The span at 50–59 (QTPPPYSWRK) shows a compositional bias: pro residues.

Functionally, antitoxin component of a type II toxin-antitoxin (TA) system. Neutralizes the effect of cognate toxin RelE4, but no other RelE or ParE toxin. In Caulobacter vibrioides (strain ATCC 19089 / CIP 103742 / CB 15) (Caulobacter crescentus), this protein is Antitoxin RelB4 (relB4).